Reading from the N-terminus, the 119-residue chain is Ribonuclease P protein component (119 aa).

It belongs to the RnpA family. As to quaternary structure, consists of a catalytic RNA component (M1 or rnpB) and a protein subunit.

The catalysed reaction is Endonucleolytic cleavage of RNA, removing 5'-extranucleotides from tRNA precursor.. Functionally, RNaseP catalyzes the removal of the 5'-leader sequence from pre-tRNA to produce the mature 5'-terminus. It can also cleave other RNA substrates such as 4.5S RNA. The protein component plays an auxiliary but essential role in vivo by binding to the 5'-leader sequence and broadening the substrate specificity of the ribozyme. In Aeromonas salmonicida (strain A449), this protein is Ribonuclease P protein component.